A 194-amino-acid chain; its full sequence is Peptidyl-tRNA hydrolase (194 aa).

TRNA is bound at residue Y17. H22 serves as the catalytic Proton acceptor. Y68, N70, and N116 together coordinate tRNA.

The protein belongs to the PTH family. As to quaternary structure, monomer.

The protein localises to the cytoplasm. The catalysed reaction is an N-acyl-L-alpha-aminoacyl-tRNA + H2O = an N-acyl-L-amino acid + a tRNA + H(+). Functionally, hydrolyzes ribosome-free peptidyl-tRNAs (with 1 or more amino acids incorporated), which drop off the ribosome during protein synthesis, or as a result of ribosome stalling. Catalyzes the release of premature peptidyl moieties from peptidyl-tRNA molecules trapped in stalled 50S ribosomal subunits, and thus maintains levels of free tRNAs and 50S ribosomes. This is Peptidyl-tRNA hydrolase from Pseudomonas syringae pv. syringae (strain B728a).